The chain runs to 121 residues: Large ribosomal subunit protein bL12 (121 aa).

Belongs to the bacterial ribosomal protein bL12 family. In terms of assembly, homodimer. Part of the ribosomal stalk of the 50S ribosomal subunit. Forms a multimeric L10(L12)X complex, where L10 forms an elongated spine to which 2 to 4 L12 dimers bind in a sequential fashion. Binds GTP-bound translation factors.

Forms part of the ribosomal stalk which helps the ribosome interact with GTP-bound translation factors. Is thus essential for accurate translation. This Limosilactobacillus fermentum (strain NBRC 3956 / LMG 18251) (Lactobacillus fermentum) protein is Large ribosomal subunit protein bL12.